A 269-amino-acid chain; its full sequence is Integral membrane protein 2C (269 aa).

The residue at position 39 (Thr39) is a Phosphothreonine. The helical; Signal-anchor for type II membrane protein transmembrane segment at Val57 to Ala77 threads the bilayer. In terms of domain architecture, BRICHOS spans Phe138–Leu232. A disulfide bridge connects residues Cys165 and Cys224. Residue Asn171 is glycosylated (N-linked (GlcNAc...) asparagine).

This sequence belongs to the ITM2 family. As to quaternary structure, interacts with BACE1. Interacts with APP. Interacts with STMN2. Post-translationally, type I membrane-bound, as well as soluble, furin has a pre-eminent role in ITM2C proteolytic processing. PCSK7 and PCSK5 may also be involved although to a lesser extent. The soluble form of PCSK7 is incapable of processing ITM2C. Fails to undergo shedding by ADAM10 and intramembrane cleavage by SPPL2B.

The protein localises to the lysosome membrane. Its subcellular location is the cell membrane. In terms of biological role, negative regulator of amyloid-beta peptide production. May inhibit the processing of APP by blocking its access to alpha- and beta-secretase. Binding to the beta-secretase-cleaved APP C-terminal fragment is negligible, suggesting that ITM2C is a poor gamma-secretase cleavage inhibitor. May play a role in TNF-induced cell death and neuronal differentiation. In Mus musculus (Mouse), this protein is Integral membrane protein 2C (Itm2c).